A 394-amino-acid chain; its full sequence is Elongation factor Tu (394 aa).

A tr-type G domain is found at 10 to 204 (KPHINVGTIG…YLDTYIPEPK (195 aa)). Positions 19 to 26 (GHVDHGKT) are G1. 19-26 (GHVDHGKT) contributes to the GTP binding site. T26 contributes to the Mg(2+) binding site. Residues 60–64 (GITIN) are G2. The tract at residues 81-84 (DCPG) is G3. GTP-binding positions include 81–85 (DCPGH) and 136–139 (NKCD). The tract at residues 136-139 (NKCD) is G4. The segment at 174–176 (SAL) is G5.

It belongs to the TRAFAC class translation factor GTPase superfamily. Classic translation factor GTPase family. EF-Tu/EF-1A subfamily. Monomer.

Its subcellular location is the cytoplasm. The enzyme catalyses GTP + H2O = GDP + phosphate + H(+). Its function is as follows. GTP hydrolase that promotes the GTP-dependent binding of aminoacyl-tRNA to the A-site of ribosomes during protein biosynthesis. The polypeptide is Elongation factor Tu (Buchnera aphidicola subsp. Baizongia pistaciae (strain Bp)).